The primary structure comprises 276 residues: uncharacterized protein (276 aa).

The first 16 residues, 1-16, serve as a signal peptide directing secretion; that stretch reads MELGLILMFASAFVSA. Asparagine 265 carries an N-linked (GlcNAc...) asparagine glycan.

This is an uncharacterized protein from Encephalitozoon cuniculi (strain GB-M1) (Microsporidian parasite).